The primary structure comprises 281 residues: Pantothenate synthetase (281 aa).

30 to 37 (MGNLHQGH) contributes to the ATP binding site. His37 functions as the Proton donor in the catalytic mechanism. Gln61 is a binding site for (R)-pantoate. Gln61 serves as a coordination point for beta-alanine. 149 to 152 (GNKD) contacts ATP. Residue Gln155 participates in (R)-pantoate binding. Residues Ile178 and 186-189 (MSSR) each bind ATP.

The protein belongs to the pantothenate synthetase family. In terms of assembly, homodimer.

It is found in the cytoplasm. It catalyses the reaction (R)-pantoate + beta-alanine + ATP = (R)-pantothenate + AMP + diphosphate + H(+). Its pathway is cofactor biosynthesis; (R)-pantothenate biosynthesis; (R)-pantothenate from (R)-pantoate and beta-alanine: step 1/1. Catalyzes the condensation of pantoate with beta-alanine in an ATP-dependent reaction via a pantoyl-adenylate intermediate. The sequence is that of Pantothenate synthetase from Shewanella sp. (strain ANA-3).